The sequence spans 299 residues: NAD(+) hydrolase PdTIR (299 aa).

The region spanning 164 to 297 (PPHDIFISHA…EIVADLMAII (134 aa)) is the TIR domain. Residues 173-174 (AW) and arginine 203 contribute to the NAD(+) site. The active site involves glutamate 239.

Homodimer. Interacts with host MYD88.

The enzyme catalyses NAD(+) + H2O = ADP-D-ribose + nicotinamide + H(+). Functionally, NAD(+) hydrolase (NADase) that catalyzes cleavage of NAD(+) into ADP-D-ribose (ADPR) and nicotinamide. The sequence is that of NAD(+) hydrolase PdTIR from Paracoccus denitrificans (strain Pd 1222).